Here is a 248-residue protein sequence, read N- to C-terminus: UPF0246 protein RAF_ORF0648 (248 aa).

The protein belongs to the UPF0246 family.

This chain is UPF0246 protein RAF_ORF0648, found in Rickettsia africae (strain ESF-5).